The sequence spans 126 residues: MFPGGGKFNPRMMKQMQKMMKDFGMDAEDLKAVKVTIELEDKLLVFEKPKVQVMDMLGNKTYSITGKAKKVAKEEEKIEDVEVKVEVTEEDIDMVSNQCGVSKEEAKKALEEVNGDLAEAILKLGN.

Residues 10-77 (PRMMKQMQKM…AKKVAKEEEK (68 aa)) enclose the NAC-A/B domain.

It belongs to the NAC-alpha family. As to quaternary structure, homodimer. Interacts with the ribosome. Binds ribosomal RNA.

Contacts the emerging nascent chain on the ribosome. The chain is Nascent polypeptide-associated complex protein from Methanococcus maripaludis (strain DSM 14266 / JCM 13030 / NBRC 101832 / S2 / LL).